The chain runs to 281 residues: Phosphatidylserine decarboxylase proenzyme (281 aa).

Residues Asp90, His143, and Ser248 each act as charge relay system; for autoendoproteolytic cleavage activity in the active site. The active-site Schiff-base intermediate with substrate; via pyruvic acid; for decarboxylase activity is Ser248. A Pyruvic acid (Ser); by autocatalysis modification is found at Ser248.

It belongs to the phosphatidylserine decarboxylase family. PSD-B subfamily. Prokaryotic type I sub-subfamily. Heterodimer of a large membrane-associated beta subunit and a small pyruvoyl-containing alpha subunit. The cofactor is pyruvate. Is synthesized initially as an inactive proenzyme. Formation of the active enzyme involves a self-maturation process in which the active site pyruvoyl group is generated from an internal serine residue via an autocatalytic post-translational modification. Two non-identical subunits are generated from the proenzyme in this reaction, and the pyruvate is formed at the N-terminus of the alpha chain, which is derived from the carboxyl end of the proenzyme. The autoendoproteolytic cleavage occurs by a canonical serine protease mechanism, in which the side chain hydroxyl group of the serine supplies its oxygen atom to form the C-terminus of the beta chain, while the remainder of the serine residue undergoes an oxidative deamination to produce ammonia and the pyruvoyl prosthetic group on the alpha chain. During this reaction, the Ser that is part of the protease active site of the proenzyme becomes the pyruvoyl prosthetic group, which constitutes an essential element of the active site of the mature decarboxylase.

It localises to the cell membrane. It catalyses the reaction a 1,2-diacyl-sn-glycero-3-phospho-L-serine + H(+) = a 1,2-diacyl-sn-glycero-3-phosphoethanolamine + CO2. It participates in phospholipid metabolism; phosphatidylethanolamine biosynthesis; phosphatidylethanolamine from CDP-diacylglycerol: step 2/2. Its function is as follows. Catalyzes the formation of phosphatidylethanolamine (PtdEtn) from phosphatidylserine (PtdSer). This chain is Phosphatidylserine decarboxylase proenzyme, found in Francisella philomiragia subsp. philomiragia (strain ATCC 25017 / CCUG 19701 / FSC 153 / O#319-036).